We begin with the raw amino-acid sequence, 247 residues long: Ribosomal RNA large subunit methyltransferase E (247 aa).

The disordered stretch occupies residues 1-21 (MKVNPKNSPKDNLKDSPKVSA). Positions 8-17 (SPKDNLKDSP) are enriched in basic and acidic residues. S-adenosyl-L-methionine-binding residues include glycine 80, tryptophan 82, aspartate 108, aspartate 124, and aspartate 153. Lysine 193 acts as the Proton acceptor in catalysis.

Belongs to the class I-like SAM-binding methyltransferase superfamily. RNA methyltransferase RlmE family.

The protein localises to the cytoplasm. The catalysed reaction is uridine(2552) in 23S rRNA + S-adenosyl-L-methionine = 2'-O-methyluridine(2552) in 23S rRNA + S-adenosyl-L-homocysteine + H(+). Specifically methylates the uridine in position 2552 of 23S rRNA at the 2'-O position of the ribose in the fully assembled 50S ribosomal subunit. This is Ribosomal RNA large subunit methyltransferase E from Polaromonas sp. (strain JS666 / ATCC BAA-500).